We begin with the raw amino-acid sequence, 281 residues long: Diaminopimelate epimerase (281 aa).

Substrate contacts are provided by N13 and N66. C75 acts as the Proton donor in catalysis. Substrate is bound by residues G76–N77, N164, N197, and E215–R216. C224 acts as the Proton acceptor in catalysis. G225–T226 contacts substrate.

It belongs to the diaminopimelate epimerase family. Homodimer.

Its subcellular location is the cytoplasm. It catalyses the reaction (2S,6S)-2,6-diaminopimelate = meso-2,6-diaminopimelate. It participates in amino-acid biosynthesis; L-lysine biosynthesis via DAP pathway; DL-2,6-diaminopimelate from LL-2,6-diaminopimelate: step 1/1. Functionally, catalyzes the stereoinversion of LL-2,6-diaminopimelate (L,L-DAP) to meso-diaminopimelate (meso-DAP), a precursor of L-lysine and an essential component of the bacterial peptidoglycan. In Gloeothece citriformis (strain PCC 7424) (Cyanothece sp. (strain PCC 7424)), this protein is Diaminopimelate epimerase.